Consider the following 108-residue polypeptide: Parvalbumin beta 2 (108 aa).

The residue at position 2 (S2) is an N-acetylserine. EF-hand domains are found at residues 38-73 (KSSD…FSAS) and 77-108 (LTDA…MIKG). 11 residues coordinate Ca(2+): D51, D53, S55, F57, E59, E62, D90, D92, D94, M96, and E101.

It belongs to the parvalbumin family.

Its function is as follows. In muscle, parvalbumin is thought to be involved in relaxation after contraction. It binds two calcium ions. This Salmo salar (Atlantic salmon) protein is Parvalbumin beta 2.